Consider the following 254-residue polypeptide: Acetylglutamate kinase (254 aa).

Substrate contacts are provided by residues 40–41 (GG), R62, and N158.

It belongs to the acetylglutamate kinase family. ArgB subfamily.

The protein localises to the cytoplasm. The enzyme catalyses N-acetyl-L-glutamate + ATP = N-acetyl-L-glutamyl 5-phosphate + ADP. It participates in amino-acid biosynthesis; L-arginine biosynthesis; N(2)-acetyl-L-ornithine from L-glutamate: step 2/4. Functionally, catalyzes the ATP-dependent phosphorylation of N-acetyl-L-glutamate. The chain is Acetylglutamate kinase from Chloroflexus aurantiacus (strain ATCC 29366 / DSM 635 / J-10-fl).